Here is a 237-residue protein sequence, read N- to C-terminus: Large ribosomal subunit protein uL1 (237 aa).

The protein belongs to the universal ribosomal protein uL1 family. Part of the 50S ribosomal subunit.

Binds directly to 23S rRNA. The L1 stalk is quite mobile in the ribosome, and is involved in E site tRNA release. Functionally, protein L1 is also a translational repressor protein, it controls the translation of the L11 operon by binding to its mRNA. The chain is Large ribosomal subunit protein uL1 from Synechococcus elongatus (strain ATCC 33912 / PCC 7942 / FACHB-805) (Anacystis nidulans R2).